The sequence spans 603 residues: Prostaglandin G/H synthase 2 (603 aa).

Positions 1-17 (MLLPCALLAALLAAGHA) are cleaved as a signal peptide. Residues 18 to 55 (ANPCCSLPCQNRGVCMTTGFDRYECDCTRTGYYGENCT) enclose the EGF-like domain. Disulfide bonds link Cys21-Cys32, Cys22-Cys145, Cys26-Cys42, and Cys44-Cys54. Residues Asn53 and Asn90 are each glycosylated (N-linked (GlcNAc...) asparagine). Position 106 (Arg106) interacts with substrate. Asn130 carries N-linked (GlcNAc...) asparagine glycosylation. His193 functions as the Proton acceptor in the catalytic mechanism. Tyr341 is a substrate binding site. Tyr371 (for cyclooxygenase activity) is an active-site residue. Heme b is bound at residue His374. A disulfide bond links Cys555 and Cys561.

The protein belongs to the prostaglandin G/H synthase family. Homodimer. The cofactor is heme b.

The protein resides in the microsome membrane. It localises to the endoplasmic reticulum membrane. The enzyme catalyses (5Z,8Z,11Z,14Z)-eicosatetraenoate + AH2 + 2 O2 = prostaglandin H2 + A + H2O. It carries out the reaction (9Z,12Z)-octadecadienoate + AH2 + O2 = (9R)-hydroxy-(10E,12Z)-octadecadienoate + A + H2O. It catalyses the reaction (9Z,12Z)-octadecadienoate + AH2 + O2 = (9S)-hydroxy-(10E,12Z)-octadecadienoate + A + H2O. The catalysed reaction is (9Z,12Z)-octadecadienoate + AH2 + O2 = (13S)-hydroxy-(9Z,11E)-octadecadienoate + A + H2O. The enzyme catalyses (9Z,12Z)-octadecadienoate + AH2 + O2 = (13R)-hydroxy-(9Z,11E)-octadecadienoate + A + H2O. Its pathway is lipid metabolism; prostaglandin biosynthesis. Its function is as follows. Dual cyclooxygenase and peroxidase in the biosynthesis pathway of prostanoids, a class of C20 oxylipins mainly derived from arachidonate ((5Z,8Z,11Z,14Z)-eicosatetraenoate, AA, C20:4(n-6)), with a particular role in the inflammatory response. The cyclooxygenase activity oxygenates AA to the hydroperoxy endoperoxide prostaglandin G2 (PGG2), and the peroxidase activity reduces PGG2 to the hydroxy endoperoxide prostaglandin H2 (PGH2), the precursor of all 2-series prostaglandins and thromboxanes. This complex transformation is initiated by abstraction of hydrogen at carbon 13 (with S-stereochemistry), followed by insertion of molecular O2 to form the endoperoxide bridge between carbon 9 and 11 that defines prostaglandins. The insertion of a second molecule of O2 (bis-oxygenase activity) yields a hydroperoxy group in PGG2 that is then reduced to PGH2 by two electrons. Similarly catalyzes successive cyclooxygenation and peroxidation of dihomo-gamma-linoleate (DGLA, C20:3(n-6)) and eicosapentaenoate (EPA, C20:5(n-3)) to corresponding PGH1 and PGH3, the precursors of 1- and 3-series prostaglandins. In an alternative pathway of prostanoid biosynthesis, converts 2-arachidonoyl lysophopholipids to prostanoid lysophopholipids, which are then hydrolyzed by intracellular phospholipases to release free prostanoids. Metabolizes 2-arachidonoyl glycerol yielding the glyceryl ester of PGH2, a process that can contribute to pain response. Generates lipid mediators from n-3 and n-6 polyunsaturated fatty acids (PUFAs) via a lipoxygenase-type mechanism. Oxygenates PUFAs to hydroperoxy compounds and then reduces them to corresponding alcohols. Plays a role in the generation of resolution phase interaction products (resolvins) during both sterile and infectious inflammation. Metabolizes docosahexaenoate (DHA, C22:6(n-3)) to 17R-HDHA, a precursor of the D-series resolvins (RvDs). As a component of the biosynthetic pathway of E-series resolvins (RvEs), converts eicosapentaenoate (EPA, C20:5(n-3)) primarily to 18S-HEPE that is further metabolized by ALOX5 and LTA4H to generate 18S-RvE1 and 18S-RvE2. In vascular endothelial cells, converts docosapentaenoate (DPA, C22:5(n-3)) to 13R-HDPA, a precursor for 13-series resolvins (RvTs) shown to activate macrophage phagocytosis during bacterial infection. In activated leukocytes, contributes to oxygenation of hydroxyeicosatetraenoates (HETE) to diHETES (5,15-diHETE and 5,11-diHETE). Can also use linoleate (LA, (9Z,12Z)-octadecadienoate, C18:2(n-6)) as substrate and produce hydroxyoctadecadienoates (HODEs) in a regio- and stereospecific manner, being (9R)-HODE ((9R)-hydroxy-(10E,12Z)-octadecadienoate) and (13S)-HODE ((13S)-hydroxy-(9Z,11E)-octadecadienoate) its major products. During neuroinflammation, plays a role in neuronal secretion of specialized preresolving mediators (SPMs) 15R-lipoxin A4 that regulates phagocytic microglia. This is Prostaglandin G/H synthase 2 (PTGS2) from Gallus gallus (Chicken).